Consider the following 77-residue polypeptide: Acyl carrier protein (77 aa).

Residues 2–77 (STIEERVKKV…EAIDYVVAHQ (76 aa)) form the Carrier domain. Ser-37 bears the O-(pantetheine 4'-phosphoryl)serine mark.

Belongs to the acyl carrier protein (ACP) family. In terms of processing, 4'-phosphopantetheine is transferred from CoA to a specific serine of apo-ACP by AcpS. This modification is essential for activity because fatty acids are bound in thioester linkage to the sulfhydryl of the prosthetic group.

It is found in the cytoplasm. It functions in the pathway lipid metabolism; fatty acid biosynthesis. Carrier of the growing fatty acid chain in fatty acid biosynthesis. The protein is Acyl carrier protein of Chromohalobacter salexigens (strain ATCC BAA-138 / DSM 3043 / CIP 106854 / NCIMB 13768 / 1H11).